A 612-amino-acid chain; its full sequence is Citryl-spermidine/3,4-dihydroxybenzoyl-citryl-spermidine:spermidine ligase (612 aa).

Residues 282–284 (SMR), lysine 298, arginine 310, tyrosine 390, and glutamate 461 contribute to the ATP site.

Belongs to the IucA/IucC family. In terms of assembly, homodimer.

The enzyme catalyses N(8)-citryl-spermidine + spermidine + ATP = N(8),N'(8)-citryl-bis(spermidine) + AMP + diphosphate + H(+). It carries out the reaction N(1)-(3,4-dihydroxybenzoyl)-N(8)-citryl-spermidine + spermidine + ATP = N(1)-(3,4-dihydroxybenzoyl)-N(8),N'(8)-citryl-bis(spermidine) + AMP + diphosphate + H(+). It participates in siderophore biosynthesis; petrobactin biosynthesis. Involved in the biosynthesis of petrobactin, a catecholate siderophore that functions in both iron acquisition and virulence. Catalyzes the ATP-dependent condensation of spermidine with N(8)-citryl-spermidine or N(1)-(3,4-dihydroxbenzoyl)-N(8)-citryl-spermidine, two intermediates in petrobactin biosynthesis pathway. This is Citryl-spermidine/3,4-dihydroxybenzoyl-citryl-spermidine:spermidine ligase from Bacillus anthracis.